A 245-amino-acid chain; its full sequence is 1-(5-phosphoribosyl)-5-[(5-phosphoribosylamino)methylideneamino] imidazole-4-carboxamide isomerase (245 aa).

Asp8 functions as the Proton acceptor in the catalytic mechanism. Residue Asp129 is the Proton donor of the active site.

It belongs to the HisA/HisF family.

It is found in the cytoplasm. The enzyme catalyses 1-(5-phospho-beta-D-ribosyl)-5-[(5-phospho-beta-D-ribosylamino)methylideneamino]imidazole-4-carboxamide = 5-[(5-phospho-1-deoxy-D-ribulos-1-ylimino)methylamino]-1-(5-phospho-beta-D-ribosyl)imidazole-4-carboxamide. It participates in amino-acid biosynthesis; L-histidine biosynthesis; L-histidine from 5-phospho-alpha-D-ribose 1-diphosphate: step 4/9. This is 1-(5-phosphoribosyl)-5-[(5-phosphoribosylamino)methylideneamino] imidazole-4-carboxamide isomerase from Geotalea daltonii (strain DSM 22248 / JCM 15807 / FRC-32) (Geobacter daltonii).